The primary structure comprises 370 residues: Fe(2+) transport protein 2 (370 aa).

The N-terminal stretch at 1–25 (MMMSSSQTPVRIAFVFLVILAATDA) is a signal peptide. The Extracellular segment spans residues 26–55 (HSDHRTPPPACGGAAVGGECHSVARALRLK). The helical transmembrane segment at 56 to 76 (LIAIPAILAASVAGVCLPLFA) threads the bilayer. Over 77–85 (RSVPALRPD) the chain is Cytoplasmic. A helical transmembrane segment spans residues 86–106 (GGLFAVVKAFASGVILGTGYM). Over 107–130 (HVLPDSFNDLTSPCLPRKPWSEFP) the chain is Extracellular. A helical membrane pass occupies residues 131–151 (FAAFVAMLAAVFTLMVDSLML). Residues 152 to 215 (TFHTRGSKGR…TTKAQLLRNR (64 aa)) are Cytoplasmic-facing. Residues 216–236 (VIVQVLEMGIVVHSVVIGLGM) form a helical membrane-spanning segment. Topologically, residues 237–247 (GASQNVCTIRP) are extracellular. A helical membrane pass occupies residues 248-268 (LVAALCFHQMFEGMGLGGCIL). Residues 269–278 (QAGYGGRTRS) are Cytoplasmic-facing. A helical transmembrane segment spans residues 279–299 (ALVFFFSTTTPFGIALGLALT). At 300-309 (RVYSDSSPTA) the chain is on the extracellular side. A helical transmembrane segment spans residues 310 to 330 (LVVVGLLNAASAGLLHYMALV). The Cytoplasmic segment spans residues 331 to 349 (ELLAADFMGPKLQGNVRLQ). Residues 350–370 (LAASLAILLGAGGMSVMAKWA) form a helical membrane-spanning segment.

This sequence belongs to the ZIP transporter (TC 2.A.5) family.

The protein localises to the cell membrane. Its function is as follows. Iron transporter that may play a role in the uptake of iron from the rhizosphere across the plasma membrane in the root epidermal layer. This chain is Fe(2+) transport protein 2 (IRT2), found in Oryza sativa subsp. japonica (Rice).